A 125-amino-acid polypeptide reads, in one-letter code: Small ribosomal subunit protein uS13 (125 aa).

Basic residues predominate over residues G94–V116. Positions G94–R125 are disordered.

The protein belongs to the universal ribosomal protein uS13 family. As to quaternary structure, part of the 30S ribosomal subunit. Forms a loose heterodimer with protein S19. Forms two bridges to the 50S subunit in the 70S ribosome.

Its function is as follows. Located at the top of the head of the 30S subunit, it contacts several helices of the 16S rRNA. In the 70S ribosome it contacts the 23S rRNA (bridge B1a) and protein L5 of the 50S subunit (bridge B1b), connecting the 2 subunits; these bridges are implicated in subunit movement. Contacts the tRNAs in the A and P-sites. The chain is Small ribosomal subunit protein uS13 from Nitrosospira multiformis (strain ATCC 25196 / NCIMB 11849 / C 71).